Here is a 391-residue protein sequence, read N- to C-terminus: GDP-mannose transporter (391 aa).

Positions 1-11 are enriched in basic and acidic residues; sequence MDDKKNEDVEM. The tract at residues 1-28 is disordered; that stretch reads MDDKKNEDVEMRNFNGRSSPSQRDPFIS. The Cytoplasmic segment spans residues 1–44; sequence MDDKKNEDVEMRNFNGRSSPSQRDPFISKPGAAKRGGSSFDLSN. The helical transmembrane segment at 45–65 threads the bilayer; it reads VTNSPGISILAYCLASISMTV. The Lumenal segment spans residues 66–75; the sequence is TNKYCVSGSN. A helical transmembrane segment spans residues 76–96; that stretch reads WNLNFFYLAIQSVVCIIAIII. Over 97 to 115 the chain is Cytoplasmic; sequence CKQAGLITNLAPFDTKKAK. The helical transmembrane segment at 116-138 threads the bilayer; the sequence is TWFPISLLLVGMIYTSTKALQFL. The Lumenal portion of the chain corresponds to 139 to 141; that stretch reads SVP. A helical transmembrane segment spans residues 142–164; sequence VYTIFKNLTIIVIAYGEVLWFGG. Residues 165–170 lie on the Cytoplasmic side of the membrane; that stretch reads SVTPSA. A helical transmembrane segment spans residues 171–193; it reads LFSFGLMVLSSVVAAWADIQHAL. At 194–209 the chain is on the lumenal side; it reads YGGGATQTKEAADALS. The helical transmembrane segment at 210–230 threads the bilayer; it reads TLNAGYAWMGMNVFCTAAYVL. Residues 231–245 are Cytoplasmic-facing; sequence SMRKVIKKMNFKDWD. Residues 246-266 form a helical membrane-spanning segment; it reads TMFYNNLLTIPVLFVCSFVFE. 2 N-linked (GlcNAc...) asparagine glycosylation sites follow: Asn-267 and Asn-272. Over 267 to 284 the chain is Lumenal; it reads NWSSENLTKNFPLETRNN. The helical transmembrane segment at 285 to 305 threads the bilayer; that stretch reads LILGMIYSGLATIFISYCSAW. The Cytoplasmic portion of the chain corresponds to 306 to 313; it reads CIRVTSST. A helical membrane pass occupies residues 314–336; sequence TYSMVGALNKLPIAVSGLVFFAA. Residues 337–339 are Lumenal-facing; that stretch reads PVT. Residues 340–359 form a helical membrane-spanning segment; that stretch reads FGSVSAIFIGFVSGIVYAWA. Residues 360-391 are Cytoplasmic-facing; it reads KVRQNQSKGSVLPTTQPVMSASSQSNRDAAKA. Residues 369–391 are disordered; it reads SVLPTTQPVMSASSQSNRDAAKA.

This sequence belongs to the TPT transporter family. SLC35D subfamily. Homooligomer.

The protein resides in the golgi apparatus membrane. It is found in the cytoplasmic vesicle membrane. It localises to the endoplasmic reticulum membrane. Functionally, involved in the import of GDP-mannose from the cytoplasm into the Golgi lumen. This Sclerotinia sclerotiorum (strain ATCC 18683 / 1980 / Ss-1) (White mold) protein is GDP-mannose transporter (vrg4).